A 129-amino-acid polypeptide reads, in one-letter code: Glycine cleavage system H protein (129 aa).

The Lipoyl-binding domain maps to L24–R106. K65 is subject to N6-lipoyllysine.

It belongs to the GcvH family. The glycine cleavage system is composed of four proteins: P, T, L and H. Requires (R)-lipoate as cofactor.

Its function is as follows. The glycine cleavage system catalyzes the degradation of glycine. The H protein shuttles the methylamine group of glycine from the P protein to the T protein. In Parasynechococcus marenigrum (strain WH8102), this protein is Glycine cleavage system H protein.